A 177-amino-acid chain; its full sequence is MSSNKIVLTSSDGESFQVEEVVARKLQIVKHLLEDDCVINEIPLQNVTGNILSIVLEYCKKHVDDVVDDDASEEPKKKKPDDEAKQNLDAWDAEFMKNIDMETIFKLILAANYLNVEGLLGLTCQTVADYIKDKTPEEVRELFNIENDFTHEEEEEAIRKENAWAFEADTKHEDPKP.

The interval 108–167 is interaction with the F-box domain of F-box proteins; the sequence is ILAANYLNVEGLLGLTCQTVADYIKDKTPEEVRELFNIENDFTHEEEEEAIRKENAWAFE.

It belongs to the SKP1 family. Part of a SCF (SKP1-cullin-F-box) protein ligase complex. In terms of tissue distribution, expressed at low levels in seedlings and leaves.

The protein resides in the nucleus. Its pathway is protein modification; protein ubiquitination. Its function is as follows. Involved in ubiquitination and subsequent proteasomal degradation of target proteins. Together with CUL1, RBX1 and a F-box protein, it forms a SCF E3 ubiquitin ligase complex. The functional specificity of this complex depends on the type of F-box protein. In the SCF complex, it serves as an adapter that links the F-box protein to CUL1. The protein is SKP1-like protein 15 (ASK15) of Arabidopsis thaliana (Mouse-ear cress).